Consider the following 211-residue polypeptide: Histidine biosynthesis bifunctional protein HisIE (211 aa).

A phosphoribosyl-AMP cyclohydrolase region spans residues 1 to 118 (MNVDDLTFDD…IYGASDRFGI (118 aa)). A phosphoribosyl-ATP pyrophosphohydrolase region spans residues 119–211 (IATLEALIAE…LEERHRPKEE (93 aa)).

The protein in the N-terminal section; belongs to the PRA-CH family. In the C-terminal section; belongs to the PRA-PH family.

Its subcellular location is the cytoplasm. The enzyme catalyses 1-(5-phospho-beta-D-ribosyl)-ATP + H2O = 1-(5-phospho-beta-D-ribosyl)-5'-AMP + diphosphate + H(+). It carries out the reaction 1-(5-phospho-beta-D-ribosyl)-5'-AMP + H2O = 1-(5-phospho-beta-D-ribosyl)-5-[(5-phospho-beta-D-ribosylamino)methylideneamino]imidazole-4-carboxamide. Its pathway is amino-acid biosynthesis; L-histidine biosynthesis; L-histidine from 5-phospho-alpha-D-ribose 1-diphosphate: step 2/9. The protein operates within amino-acid biosynthesis; L-histidine biosynthesis; L-histidine from 5-phospho-alpha-D-ribose 1-diphosphate: step 3/9. The protein is Histidine biosynthesis bifunctional protein HisIE (hisI) of Halalkalibacterium halodurans (strain ATCC BAA-125 / DSM 18197 / FERM 7344 / JCM 9153 / C-125) (Bacillus halodurans).